Reading from the N-terminus, the 89-residue chain is Small ribosomal subunit protein uS15 (89 aa).

This sequence belongs to the universal ribosomal protein uS15 family. Part of the 30S ribosomal subunit. Forms a bridge to the 50S subunit in the 70S ribosome, contacting the 23S rRNA.

One of the primary rRNA binding proteins, it binds directly to 16S rRNA where it helps nucleate assembly of the platform of the 30S subunit by binding and bridging several RNA helices of the 16S rRNA. In terms of biological role, forms an intersubunit bridge (bridge B4) with the 23S rRNA of the 50S subunit in the ribosome. This Lactococcus lactis subsp. lactis (strain IL1403) (Streptococcus lactis) protein is Small ribosomal subunit protein uS15.